The chain runs to 353 residues: Dimethylsulfoniopropionate lyase 2 (353 aa).

Active-site proton donor/acceptor residues include C125 and C274. Residues 326-353 form a disordered region; that stretch reads DPNETDVSKGRPTKAEHRFGPEFEEMLQ. Residues 331–346 show a composition bias toward basic and acidic residues; that stretch reads DVSKGRPTKAEHRFGP.

This sequence belongs to the aspartate/glutamate racemases family. ALMA1 subfamily. In terms of assembly, homotetramer.

The catalysed reaction is S,S-dimethyl-beta-propiothetin = acrylate + dimethyl sulfide + H(+). Mediates cleavage of dimethylsulfoniopropionate (DMSP) into dimethyl sulfide (DMS) and acrylate. DMS is the principal form by which sulfur is transported from oceans to the atmosphere and is a key component of the ocean sulfur cycle. The polypeptide is Dimethylsulfoniopropionate lyase 2 (Emiliania huxleyi (strain CCMP1516)).